The sequence spans 427 residues: Large ribosomal subunit protein uL4 (427 aa).

Ala-2 carries the N-acetylalanine modification. At Lys-14 the chain carries N6-acetyllysine. Arg-97 bears the Omega-N-methylarginine mark. Position 106 is an N6-acetyllysine (Lys-106). Lys-239 is covalently cross-linked (Glycyl lysine isopeptide (Lys-Gly) (interchain with G-Cter in SUMO2)). Lys-259 carries the N6-acetyllysine modification. Thr-266 carries the post-translational modification Phosphothreonine. Residues Ser-290 and Ser-295 each carry the phosphoserine modification. Arg-300 is subject to Citrulline. Residue Lys-327 forms a Glycyl lysine isopeptide (Lys-Gly) (interchain with G-Cter in SUMO2) linkage. 2 positions are modified to N6-acetyllysine: Lys-333 and Lys-353. Lys-364 is modified (N6-acetyllysine; alternate). Residue Lys-364 forms a Glycyl lysine isopeptide (Lys-Gly) (interchain with G-Cter in SUMO1); alternate linkage. Phosphoserine is present on Ser-365. Residues 369-427 (AAVAGKKPVVGKKGKKVAVGVKKQKKPLVGKKAAATKKPAPEKKSTEKKPTTEEKKPAA) are disordered. The span at 377 to 397 (VVGKKGKKVAVGVKKQKKPLV) shows a compositional bias: basic residues. Basic and acidic residues predominate over residues 407–427 (PAPEKKSTEKKPTTEEKKPAA).

The protein belongs to the universal ribosomal protein uL4 family. As to quaternary structure, component of the large ribosomal subunit. May bind IPO9 with low affinity. Interacts with RBM3. Citrullinated by PADI4.

It is found in the cytoplasm. Component of the large ribosomal subunit. The ribosome is a large ribonucleoprotein complex responsible for the synthesis of proteins in the cell. The polypeptide is Large ribosomal subunit protein uL4 (RPL4) (Macaca fascicularis (Crab-eating macaque)).